We begin with the raw amino-acid sequence, 466 residues long: GTPase Der (466 aa).

EngA-type G domains lie at 3-167 (PTLV…PDEP) and 176-350 (PKIA…GAAM). Residues 9 to 16 (GRSNVGKS), 56 to 60 (DTGGF), 119 to 122 (NKTE), 182 to 189 (GRPNVGKS), 229 to 233 (DTAGL), and 294 to 297 (NKWD) contribute to the GTP site. The KH-like domain maps to 351 to 435 (AHLPTPRLTR…PLRIEFRTGR (85 aa)). Residues 433–466 (TGRNPYAGKSPAPLTEAEAKRAHRRRRYGRKKYG) are disordered. Basic residues predominate over residues 453–466 (RAHRRRRYGRKKYG).

This sequence belongs to the TRAFAC class TrmE-Era-EngA-EngB-Septin-like GTPase superfamily. EngA (Der) GTPase family. As to quaternary structure, associates with the 50S ribosomal subunit.

Its function is as follows. GTPase that plays an essential role in the late steps of ribosome biogenesis. This Nitrosospira multiformis (strain ATCC 25196 / NCIMB 11849 / C 71) protein is GTPase Der.